The following is a 244-amino-acid chain: Probable ABC transporter ATP-binding protein in ycf23-apcF intergenic region (244 aa).

The region spanning 9–241 is the ABC transporter domain; sequence LEINNLTVSY…KLSTLFGEHI (233 aa). Residue 41-48 participates in ATP binding; the sequence is GPNGAGKS.

It belongs to the ABC transporter superfamily.

The protein localises to the plastid. The protein resides in the cyanelle. The protein is Probable ABC transporter ATP-binding protein in ycf23-apcF intergenic region of Cyanophora paradoxa.